We begin with the raw amino-acid sequence, 368 residues long: DNA replication and repair protein RecF (368 aa).

30–37 (GNNAQGKT) contributes to the ATP binding site.

This sequence belongs to the RecF family.

The protein resides in the cytoplasm. Its function is as follows. The RecF protein is involved in DNA metabolism; it is required for DNA replication and normal SOS inducibility. RecF binds preferentially to single-stranded, linear DNA. It also seems to bind ATP. This chain is DNA replication and repair protein RecF, found in Streptococcus pyogenes serotype M5 (strain Manfredo).